A 1441-amino-acid chain; its full sequence is Probable ubiquitin-conjugating enzyme E2 R521 (1441 aa).

The chain crosses the membrane as a helical span at residues 20–40; it reads YIHHIIINYITNSILYFFLIM. The stretch at 63–89 forms a coiled coil; sequence NQSKLVNTLDIIKDEINKWEEKNTDKD. Residues 180 to 199 show a composition bias toward basic and acidic residues; that stretch reads VSKDKMKDKSESNSEHEQES. Disordered stretches follow at residues 180–207 and 283–305; these read VSKDKMKDKSESNSEHEQESKSVVSNEI and IFGKSKNSGPSSSKTSISSMSKV. Residues 286–303 are compositionally biased toward low complexity; that stretch reads KSKNSGPSSSKTSISSMS. The stretch at 340-368 forms a coiled coil; sequence TTNEDNNDLDNLINEVERLVQETKDQETK. A compositionally biased stretch (low complexity) spans 505–538; that stretch reads TVEPVQEVAEEPVQQEVAEEPVQQEVAEEPVQQE. Disordered stretches follow at residues 505 to 554 and 577 to 605; these read TVEP…PVQK and NDFSDHSDSPEPSDSSDSEEEITNSNNLG. The span at 539–549 shows a compositional bias: acidic residues; sequence VAEEPVQEVAE. Residues 1217–1380 enclose the UBC core domain; that stretch reads AISRELLSHS…VRFNCMKWAM (164 aa). Residue Cys-1306 is the Glycyl thioester intermediate of the active site.

Belongs to the ubiquitin-conjugating enzyme family.

Its subcellular location is the membrane. The catalysed reaction is S-ubiquitinyl-[E1 ubiquitin-activating enzyme]-L-cysteine + [E2 ubiquitin-conjugating enzyme]-L-cysteine = [E1 ubiquitin-activating enzyme]-L-cysteine + S-ubiquitinyl-[E2 ubiquitin-conjugating enzyme]-L-cysteine.. Its pathway is protein modification; protein ubiquitination. Its function is as follows. Catalyzes the covalent attachment of ubiquitin to other proteins. In Acanthamoeba polyphaga (Amoeba), this protein is Probable ubiquitin-conjugating enzyme E2 R521.